Reading from the N-terminus, the 181-residue chain is Prepronociceptin (181 aa).

The N-terminal stretch at 1-19 (MKILFCDVLLLSLLSSVFS) is a signal peptide. A propeptide spanning residues 20 to 95 (SCPEDCLTCQ…QSKASEMQHL (76 aa)) is cleaved from the precursor. The segment at 103-125 (SVVQARDAEPEADAEPVADEADE) is disordered. 2 tandem repeats follow at residues 109–114 (DAEPEA) and 115–120 (DAEPVA). The tract at residues 109 to 120 (DAEPEADAEPVA) is 2 X 6 AA tandem repeats of D-A-E-P-X-A. Over residues 112 to 125 (PEADAEPVADEADE) the composition is skewed to acidic residues. Positions 174 to 181 (TLHQNGNV) are excised as a propeptide.

It belongs to the opioid neuropeptide precursor family. Post-translationally, specific enzymatic cleavages at paired basic residues probably yield other active peptides besides nociceptin. The N-terminal domain contains 6 conserved cysteines thought to be involved in disulfide bonding and/or processing. In terms of tissue distribution, expressed predominantly in the spinal cord and brain, being more abundant in the hypothalamus and striatum. Also found in small amounts in ovary.

The protein localises to the secreted. Ligand of the opioid receptor-like receptor OPRL1. It may act as a transmitter in the brain by modulating nociceptive and locomotor behavior. May be involved in neuronal differentiation and development. Its function is as follows. Blocks nociceptin action in pain transmission by inhibiting nociceptin-induced hyperalgesia and allodynia. Functionally, has potent analgesic activity. The chain is Prepronociceptin (Pnoc) from Rattus norvegicus (Rat).